Consider the following 1071-residue polypeptide: SLIT-ROBO Rho GTPase-activating protein 2 (1071 aa).

The F-BAR domain maps to 22–325 (KEIRAQLTEQ…AVENLDATSD (304 aa)). Over residues 181 to 203 (LKEAEKQEEKQIGKSVKQEDRQT) the composition is skewed to basic and acidic residues. Residues 181–211 (LKEAEKQEEKQIGKSVKQEDRQTPRSPDSTA) form a disordered region. At S206 the chain carries Phosphoserine. Positions 363–401 (QSELVQRRQQLQSRLSTLKIENEEVKKTMEATLQTIQDI) form a coiled coil. Phosphoserine occurs at positions 427, 500, 691, 695, and 724. The region spanning 489-679 (ARRSSTVRKQ…TIIIQHENIF (191 aa)) is the Rho-GAP domain. The tract at residues 703-726 (THGETISAEDSTQDVTAEHHTSDD) is disordered. Residues 728–787 (CEPIEAIAKFDYVGRTARELSFKKGASLLLYQRASDDWWEGRHNGIDGLIPHQYIVVQDT) form the SH3 domain. 2 disordered regions span residues 794-820 (RSSPKSEIEVMSEPPEEKVTARTGASC) and 835-936 (NKQR…NHRP). S795 is modified (phosphoserine). 3 stretches are compositionally biased toward polar residues: residues 857 to 867 (LGSSLTDSSSP), 874 to 885 (RPSSQPIMSQNL), and 897 to 907 (GHGSLNSISRH). The residue at position 916 (S916) is a Phosphoserine. The span at 919–933 (IRKTATAGRSKSFNN) shows a compositional bias: polar residues. Symmetric dimethylarginine; by PRMT5 is present on R927. S930 is modified (phosphoserine). A coiled-coil region spans residues 940–968 (EVIAQDIEATMNSALNELQELERQSSAKH). Residues 983–1012 (SPVVAPTSEPSSPLHTQLLKDPEPAFQRSA) are disordered. Phosphoserine is present on residues S990, S994, S1013, and S1027. Residues 1029–1071 (KMAAPVKPPATRPKPTVFPKTNATSPGVNSSASPQSTDKSCTV) form a disordered region. A compositionally biased stretch (polar residues) spans 1047-1071 (PKTNATSPGVNSSASPQSTDKSCTV).

Homodimer. Forms a heterooligomer with SRGAP1 and SRGAP3 through its F-BAR domain. Interacts (via SH3 domain) with GPHN. Interacts (via SH3 domain) with FMNL1 (activated by RAC1); regulates the actin filament severing activity of FMNL1 and actin dynamics. Interacts (via SH3 domain) with FMNL3. Interacts with RAC1; specifically stimulates RAC1 GTPase activity. Interacts (via F-BAR domain) with HOMER1. Interacts with ROBO1 and ROBO2. Interacts with FASLG. Interacts with PRMT5. Post-translationally, methylation at Arg-927 is required for the stimulation of cell migration, dimerization and localization at the plasma membrane protrusions.

The protein localises to the cell membrane. Its subcellular location is the cell projection. It is found in the dendritic spine. It localises to the postsynaptic density. The protein resides in the postsynaptic cell membrane. The protein localises to the lamellipodium. Its subcellular location is the cytoplasmic vesicle. It is found in the phagosome. It localises to the nucleus. The protein resides in the cytoplasm. The protein localises to the cytosol. Functionally, postsynaptic RAC1 GTPase activating protein (GAP) that plays a key role in neuronal morphogenesis and migration mainly during development of the cerebral cortex. Regulates excitatory and inhibitory synapse maturation and density in cortical pyramidal neurons. SRGAP2/SRGAP2A limits excitatory and inhibitory synapse density through its RAC1-specific GTPase activating activity, while it promotes maturation of both excitatory and inhibitory synapses through its ability to bind to the postsynaptic scaffolding protein HOMER1 at excitatory synapses, and the postsynaptic protein GPHN at inhibitory synapses. Mechanistically, acts by binding and deforming membranes, thereby regulating actin dynamics to regulate cell migration and differentiation. Promotes cell repulsion and contact inhibition of locomotion: localizes to protrusions with curved edges and controls the duration of RAC1 activity in contact protrusions. In non-neuronal cells, may also play a role in cell migration by regulating the formation of lamellipodia and filopodia. The chain is SLIT-ROBO Rho GTPase-activating protein 2 from Rattus norvegicus (Rat).